Consider the following 419-residue polypeptide: L-rhamnose isomerase (419 aa).

Mn(2+) contacts are provided by histidine 262, aspartate 294, and aspartate 296.

Belongs to the rhamnose isomerase family. As to quaternary structure, homotetramer. Requires Mn(2+) as cofactor.

It localises to the cytoplasm. The catalysed reaction is L-rhamnopyranose = L-rhamnulose. It participates in carbohydrate degradation; L-rhamnose degradation; glycerone phosphate from L-rhamnose: step 1/3. Functionally, catalyzes the interconversion of L-rhamnose and L-rhamnulose. This chain is L-rhamnose isomerase, found in Shigella flexneri.